The sequence spans 158 residues: Extracellular giant hemoglobin major globin subunit A2 (158 aa).

The first 16 residues, 1-16, serve as a signal peptide directing secretion; it reads MKSLIVFACLVAYAAA. Positions 17–158 constitute a Globin domain; sequence DCTSLNRLLV…MNQIVSGISG (142 aa). Cys18 and Cys148 are oxidised to a cystine. Residue Cys89 coordinates hydrogen sulfide. His110 provides a ligand contact to heme b.

It belongs to the globin family. As to quaternary structure, the 400 kDa hemoglobin consists of a spherical 24-mer arranged as a double layer of dome-shaped dodecamers. Each dodecamer is composed of the 3-fold trimer of the tetramer A1-A2-B1-B2 having one intra-tetramer (A1-B2) disulfide bond and one inter-tetramer (B1-B2) disulfide bond per tetramer.

It is found in the secreted. The extracellular giant hemoglobin is able to bind and transport oxygen and hydrosulfide simultaneously and reversibly at two different sites. The protein is Extracellular giant hemoglobin major globin subunit A2 (ghbA2) of Oligobrachia mashikoi (Beard worm).